Reading from the N-terminus, the 279-residue chain is MVIKAKSPAGFAEKYIIESIWNGRFPPGSILPAERELSELIGVTRTTLREVLQRLARDGWLTIQHGKPTKVNQFMETSGLHILDTLMTLDVDNATNIVEDLLAARTNISPIFMRYAFKANKENSERTIKNVIESCEALVNASSWDDFIASSPYADKVLQSVKEDNEKDEAKRQEILIAKTFNFYDYMLFQRLAFHSGNQIYGLIFNGLKKLYDRVGSYYFSNPASRDLALRFYRQLLETCETGQREQLPVVIRHYGMESAQIWNEMKKQLPTNFTEDDS.

In terms of domain architecture, HTH gntR-type spans lysine 6–phenylalanine 74. Residues glutamate 34–glutamine 53 constitute a DNA-binding region (H-T-H motif).

Homodimer.

It is found in the cytoplasm. Multifunctional regulator of fatty acid metabolism. This chain is Fatty acid metabolism regulator protein, found in Vibrio parahaemolyticus serotype O3:K6 (strain RIMD 2210633).